The following is a 152-amino-acid chain: Small ribosomal subunit protein uS13 (152 aa).

At Ser41 the chain carries Phosphoserine.

It belongs to the universal ribosomal protein uS13 family.

It is found in the cytoplasm. In terms of biological role, located at the top of the head of the 40S subunit, it contacts several helices of the 18S rRNA. The protein is Small ribosomal subunit protein uS13 (RpS18) of Drosophila melanogaster (Fruit fly).